The following is a 288-amino-acid chain: 4-diphosphocytidyl-2-C-methyl-D-erythritol kinase (288 aa).

Residue lysine 11 is part of the active site. ATP is bound at residue 100–110 (PIAAGLGSGSS). Residue aspartate 140 is part of the active site.

It belongs to the GHMP kinase family. IspE subfamily.

The enzyme catalyses 4-CDP-2-C-methyl-D-erythritol + ATP = 4-CDP-2-C-methyl-D-erythritol 2-phosphate + ADP + H(+). It participates in isoprenoid biosynthesis; isopentenyl diphosphate biosynthesis via DXP pathway; isopentenyl diphosphate from 1-deoxy-D-xylulose 5-phosphate: step 3/6. Catalyzes the phosphorylation of the position 2 hydroxy group of 4-diphosphocytidyl-2C-methyl-D-erythritol. The chain is 4-diphosphocytidyl-2-C-methyl-D-erythritol kinase from Wolbachia sp. subsp. Drosophila simulans (strain wRi).